A 305-amino-acid polypeptide reads, in one-letter code: Ribonuclease BN (305 aa).

Zn(2+) contacts are provided by H64, H66, D68, H69, H141, D212, and H270. D68 (proton acceptor) is an active-site residue.

Belongs to the RNase Z family. RNase BN subfamily. In terms of assembly, homodimer. Requires Zn(2+) as cofactor.

In terms of biological role, zinc phosphodiesterase, which has both exoribonuclease and endoribonuclease activities. This chain is Ribonuclease BN, found in Salmonella gallinarum (strain 287/91 / NCTC 13346).